A 363-amino-acid chain; its full sequence is Transcription factor PIF6 (363 aa).

2 disordered regions span residues 154–204 (SEGS…RNDI) and 340–363 (IPNPNSLSNLDGATLHKKSRKTNR). The span at 178–188 (RTRKALVKRKR) shows a compositional bias: basic residues. The bHLH domain maps to 188-237 (RNAEAYNSPERNQRNDINKKMRTLQNLLPNSHKDDNESMLDEAINYMTNL). A compositionally biased stretch (polar residues) spans 340-350 (IPNPNSLSNLD). The span at 354–363 (LHKKSRKTNR) shows a compositional bias: basic residues.

As to quaternary structure, homodimer. Interacts with APRR1/TOC1. Binds to RGL2 and RGA. Associates to PTAC12/HMR/PAP5 which acts as a transcriptional coactivator. In terms of tissue distribution, mainly expressed in fruits and flowers and, to a lower extent, in leaves, stems, seedlings and roots.

The protein resides in the nucleus. In terms of biological role, transcription factor. The sequence is that of Transcription factor PIF6 from Arabidopsis thaliana (Mouse-ear cress).